Reading from the N-terminus, the 131-residue chain is MFDGIGFMELLLIGILGLVVLGPERLPTAVRSISSWIRAMKKMANSVKDELEQELKIEQLHSDLKNAESQGLKNLSPELQDSIDQLKEAAQSVNRPYQVEDVPAAKETPAKETPTAEKSTTTGANSDKPNG.

A helical transmembrane segment spans residues 2–22 (FDGIGFMELLLIGILGLVVLG). Composition is skewed to polar residues over residues 68-83 (ESQG…QDSI) and 116-131 (AEKS…KPNG). The interval 68–131 (ESQGLKNLSP…TGANSDKPNG (64 aa)) is disordered.

This sequence belongs to the TatB family. In terms of assembly, the Tat system comprises two distinct complexes: a TatABC complex, containing multiple copies of TatA, TatB and TatC subunits, and a separate TatA complex, containing only TatA subunits. Substrates initially bind to the TatABC complex, which probably triggers association of the separate TatA complex to form the active translocon.

The protein localises to the cell inner membrane. Part of the twin-arginine translocation (Tat) system that transports large folded proteins containing a characteristic twin-arginine motif in their signal peptide across membranes. Together with TatC, TatB is part of a receptor directly interacting with Tat signal peptides. TatB may form an oligomeric binding site that transiently accommodates folded Tat precursor proteins before their translocation. The polypeptide is Sec-independent protein translocase protein TatB (Shewanella pealeana (strain ATCC 700345 / ANG-SQ1)).